Consider the following 350-residue polypeptide: Thymidine kinase (350 aa).

15-22 (GAHGLGKT) serves as a coordination point for ATP. Catalysis depends on E44, which acts as the Proton acceptor. A substrate-binding site is contributed by Q88. An ATP-binding site is contributed by R178. Residue R184 coordinates substrate.

The protein belongs to the herpesviridae thymidine kinase family. In terms of assembly, homodimer.

It catalyses the reaction thymidine + ATP = dTMP + ADP + H(+). Catalyzes the transfer of the gamma-phospho group of ATP to thymidine to generate dTMP in the salvage pathway of pyrimidine synthesis. The dTMP serves as a substrate for DNA polymerase during viral DNA replication. Allows the virus to be reactivated and to grow in non-proliferative cells lacking a high concentration of phosphorylated nucleic acid precursors. This Bos taurus (Bovine) protein is Thymidine kinase.